Here is a 235-residue protein sequence, read N- to C-terminus: Phosphoribosylformylglycinamidine synthase subunit PurQ (235 aa).

Residues 3-234 (FGVLVFPGSN…LNSLMAQGVT (232 aa)) form the Glutamine amidotransferase type-1 domain. Catalysis depends on C86, which acts as the Nucleophile. Residues H203 and E205 contribute to the active site.

Part of the FGAM synthase complex composed of 1 PurL, 1 PurQ and 2 PurS subunits.

The protein resides in the cytoplasm. It carries out the reaction N(2)-formyl-N(1)-(5-phospho-beta-D-ribosyl)glycinamide + L-glutamine + ATP + H2O = 2-formamido-N(1)-(5-O-phospho-beta-D-ribosyl)acetamidine + L-glutamate + ADP + phosphate + H(+). The catalysed reaction is L-glutamine + H2O = L-glutamate + NH4(+). It participates in purine metabolism; IMP biosynthesis via de novo pathway; 5-amino-1-(5-phospho-D-ribosyl)imidazole from N(2)-formyl-N(1)-(5-phospho-D-ribosyl)glycinamide: step 1/2. Part of the phosphoribosylformylglycinamidine synthase complex involved in the purines biosynthetic pathway. Catalyzes the ATP-dependent conversion of formylglycinamide ribonucleotide (FGAR) and glutamine to yield formylglycinamidine ribonucleotide (FGAM) and glutamate. The FGAM synthase complex is composed of three subunits. PurQ produces an ammonia molecule by converting glutamine to glutamate. PurL transfers the ammonia molecule to FGAR to form FGAM in an ATP-dependent manner. PurS interacts with PurQ and PurL and is thought to assist in the transfer of the ammonia molecule from PurQ to PurL. The sequence is that of Phosphoribosylformylglycinamidine synthase subunit PurQ from Acaryochloris marina (strain MBIC 11017).